Consider the following 239-residue polypeptide: Methylthioribulose-1-phosphate dehydratase (239 aa).

A substrate-binding site is contributed by Cys-94. 2 residues coordinate Zn(2+): His-112 and His-114. Residue Glu-136 is the Proton donor/acceptor of the active site. His-192 is a Zn(2+) binding site.

The protein belongs to the aldolase class II family. MtnB subfamily. Zn(2+) is required as a cofactor.

It localises to the cytoplasm. It catalyses the reaction 5-(methylsulfanyl)-D-ribulose 1-phosphate = 5-methylsulfanyl-2,3-dioxopentyl phosphate + H2O. Its pathway is amino-acid biosynthesis; L-methionine biosynthesis via salvage pathway; L-methionine from S-methyl-5-thio-alpha-D-ribose 1-phosphate: step 2/6. In terms of biological role, catalyzes the dehydration of methylthioribulose-1-phosphate (MTRu-1-P) into 2,3-diketo-5-methylthiopentyl-1-phosphate (DK-MTP-1-P). Functions in the methionine salvage pathway. May play a role in apoptosis. This Aquarana catesbeiana (American bullfrog) protein is Methylthioribulose-1-phosphate dehydratase.